The sequence spans 371 residues: Interstrand DNA cross-link repair glycosylase (371 aa).

The short motif at 37 to 39 is the QXQ; important for activity element; it reads QAQ.

This sequence belongs to the DNA glycosylase AlkZ-like family.

In terms of biological role, DNA glycosylase involved in the repair of interstrand DNA cross-links (ICLs), which are highly toxic DNA lesions that covalently tether the opposing strands of DNA, thereby inhibiting essential cellular processes such as DNA replication and transcription. Acts by unhooking both sides of the ICLs, forming abasic (AP) sites on both strands. AlkZ specifically repairs DNA damage induced by azinomycin B (AZB), a natural product with potent antibiotic and antitumor activities that interacts covalently with duplex DNA and forms ICLs. AlkZ thus confers self-resistance to azinomycin B, which is produced by S.sahachiroi. It may also protect target sites by protein-DNA interaction. Binds sequence non-specifically to native DNA and structure-specifically to azinomycin B-modified sites, with higher affinity to azinomycin B-modified sites and lower affinity to native DNA duplex. In vitro, also acts on monoadducts and can catalyze the excision of N7-methylguanine (7mGua) from an oligonucleotide containing N7-methyldeoxyguanosine (d7mG). Is a monofunctional DNA glycosylase that does not have lyase activity. In Streptomyces sahachiroi, this protein is Interstrand DNA cross-link repair glycosylase.